We begin with the raw amino-acid sequence, 205 residues long: Recombination protein RecR (205 aa).

The segment at 59 to 74 (CARCNTFCEGGLCDIC) adopts a C4-type zinc-finger fold. Residues 82-177 (RRLMVVHMPA…KVSRLSQGIP (96 aa)) enclose the Toprim domain.

It belongs to the RecR family.

Its function is as follows. May play a role in DNA repair. It seems to be involved in an RecBC-independent recombinational process of DNA repair. It may act with RecF and RecO. The chain is Recombination protein RecR from Neisseria meningitidis serogroup A / serotype 4A (strain DSM 15465 / Z2491).